A 486-amino-acid polypeptide reads, in one-letter code: Wax ester synthase/diacylglycerol acyltransferase 11 (486 aa).

Residues 1-192 (MGEDKKTARE…CNSGFFNKIW (192 aa)) lie on the Cytoplasmic side of the membrane. Residue H144 is the Proton acceptor of the active site. A helical membrane pass occupies residues 193–213 (WLFVGLWFILRLLFNTFVDIL). Residues 214-486 (MFALTIFVLR…LERGLYEIEV (273 aa)) lie on the Extracellular side of the membrane.

This sequence in the N-terminal section; belongs to the long-chain O-acyltransferase family. As to expression, mostly expressed in inflorescences and flowers, especially at the periphery of petal epidermal cells.

It is found in the cell membrane. The protein resides in the endoplasmic reticulum membrane. It carries out the reaction an acyl-CoA + a 1,2-diacyl-sn-glycerol = a triacyl-sn-glycerol + CoA. It catalyses the reaction a long chain fatty alcohol + a fatty acyl-CoA = a wax ester + CoA. Its pathway is glycerolipid metabolism; triacylglycerol biosynthesis. It participates in lipid metabolism. Functionally, bifunctional wax ester synthase/diacylglycerol acyltransferase. Involved in cuticular wax biosynthesis. Required for petals development, probably by mediating the production of fatty acids at the plasma membrane in the petal epidermis acting as lubricants that makes petal elongation smooth in narrow space between the sepals and the anthers inside floral buds. This chain is Wax ester synthase/diacylglycerol acyltransferase 11, found in Arabidopsis thaliana (Mouse-ear cress).